The primary structure comprises 93 residues: MAHKKGTGSTRNGRDSNAQRLGVKRFGGQAVIAGNILVRQRGTKFHAGNNVGIGKDDTLFALVDGVVTFERKGKSRKKVSVYPAAAAAEAVAG.

This sequence belongs to the bacterial ribosomal protein bL27 family.

The protein is Large ribosomal subunit protein bL27 of Trichormus variabilis (strain ATCC 29413 / PCC 7937) (Anabaena variabilis).